The following is a 209-amino-acid chain: ATP-dependent Clp protease proteolytic subunit 1 (209 aa).

Residue serine 109 is the Nucleophile of the active site. Histidine 134 is an active-site residue.

This sequence belongs to the peptidase S14 family. Fourteen ClpP subunits assemble into 2 heptameric rings which stack back to back to give a disk-like structure with a central cavity, resembling the structure of eukaryotic proteasomes.

It is found in the cytoplasm. It carries out the reaction Hydrolysis of proteins to small peptides in the presence of ATP and magnesium. alpha-casein is the usual test substrate. In the absence of ATP, only oligopeptides shorter than five residues are hydrolyzed (such as succinyl-Leu-Tyr-|-NHMec, and Leu-Tyr-Leu-|-Tyr-Trp, in which cleavage of the -Tyr-|-Leu- and -Tyr-|-Trp bonds also occurs).. In terms of biological role, cleaves peptides in various proteins in a process that requires ATP hydrolysis. Has a chymotrypsin-like activity. Plays a major role in the degradation of misfolded proteins. The protein is ATP-dependent Clp protease proteolytic subunit 1 of Corynebacterium diphtheriae (strain ATCC 700971 / NCTC 13129 / Biotype gravis).